A 146-amino-acid polypeptide reads, in one-letter code: Hemoglobin subunit beta (146 aa).

Position 1 is an N-acetylvaline (V1). The region spanning 2-146 (HLTPDEKNAV…VANALAHKYH (145 aa)) is the Globin domain. A Phosphothreonine modification is found at T12. Phosphoserine is present on S44. K59 is modified (N6-acetyllysine). H63 provides a ligand contact to heme b. The residue at position 82 (K82) is an N6-acetyllysine. A heme b-binding site is contributed by H92. At C93 the chain carries S-nitrosocysteine. An N6-acetyllysine modification is found at K144.

Belongs to the globin family. As to quaternary structure, heterotetramer of two alpha chains and two beta chains. As to expression, red blood cells.

Involved in oxygen transport from the lung to the various peripheral tissues. The sequence is that of Hemoglobin subunit beta (HBB) from Piliocolobus badius (Western red colobus).